We begin with the raw amino-acid sequence, 95 residues long: uncharacterized protein (95 aa).

3 consecutive transmembrane segments (helical) span residues 3–23 (YTVL…GFSF), 35–55 (ILFL…MMLT), and 63–83 (MLGV…VMII).

Its subcellular location is the cell membrane. This is an uncharacterized protein from Mycoplasma pneumoniae (strain ATCC 29342 / M129 / Subtype 1) (Mycoplasmoides pneumoniae).